We begin with the raw amino-acid sequence, 190 residues long: 6,7-dimethyl-8-ribityllumazine synthase (190 aa).

5-amino-6-(D-ribitylamino)uracil is bound by residues Trp31, Ser65–Glu67, and Cys89–Ile91. Position 94 to 95 (Glu94 to Thr95) interacts with (2S)-2-hydroxy-3-oxobutyl phosphate. His97 serves as the catalytic Proton donor. Phe122 contacts 5-amino-6-(D-ribitylamino)uracil. Arg136 serves as a coordination point for (2S)-2-hydroxy-3-oxobutyl phosphate.

Belongs to the DMRL synthase family.

The enzyme catalyses (2S)-2-hydroxy-3-oxobutyl phosphate + 5-amino-6-(D-ribitylamino)uracil = 6,7-dimethyl-8-(1-D-ribityl)lumazine + phosphate + 2 H2O + H(+). The protein operates within cofactor biosynthesis; riboflavin biosynthesis; riboflavin from 2-hydroxy-3-oxobutyl phosphate and 5-amino-6-(D-ribitylamino)uracil: step 1/2. Functionally, catalyzes the formation of 6,7-dimethyl-8-ribityllumazine by condensation of 5-amino-6-(D-ribitylamino)uracil with 3,4-dihydroxy-2-butanone 4-phosphate. This is the penultimate step in the biosynthesis of riboflavin. In Flavobacterium johnsoniae (strain ATCC 17061 / DSM 2064 / JCM 8514 / BCRC 14874 / CCUG 350202 / NBRC 14942 / NCIMB 11054 / UW101) (Cytophaga johnsonae), this protein is 6,7-dimethyl-8-ribityllumazine synthase.